The chain runs to 228 residues: Uracil-DNA glycosylase (228 aa).

Catalysis depends on D64, which acts as the Proton acceptor.

This sequence belongs to the uracil-DNA glycosylase (UDG) superfamily. UNG family.

The protein resides in the cytoplasm. It carries out the reaction Hydrolyzes single-stranded DNA or mismatched double-stranded DNA and polynucleotides, releasing free uracil.. Functionally, excises uracil residues from the DNA which can arise as a result of misincorporation of dUMP residues by DNA polymerase or due to deamination of cytosine. This is Uracil-DNA glycosylase from Yersinia pestis bv. Antiqua (strain Antiqua).